We begin with the raw amino-acid sequence, 458 residues long: Argininosuccinate lyase (458 aa).

The protein belongs to the lyase 1 family. Argininosuccinate lyase subfamily.

The protein localises to the cytoplasm. The enzyme catalyses 2-(N(omega)-L-arginino)succinate = fumarate + L-arginine. The protein operates within amino-acid biosynthesis; L-arginine biosynthesis; L-arginine from L-ornithine and carbamoyl phosphate: step 3/3. This is Argininosuccinate lyase from Salmonella agona (strain SL483).